Here is a 631-residue protein sequence, read N- to C-terminus: Probable sulfate transporter 3.3 (631 aa).

The Cytoplasmic segment spans residues 1 to 69 (MEVHKVVAPP…EYSFSLLKSD (69 aa)). Residues 70 to 90 (VVSGLTIASLAIPQGISYAKL) form a helical membrane-spanning segment. Topologically, residues 91 to 92 (AN) are extracellular. A helical membrane pass occupies residues 93–113 (LPPIVGLYSSFVPPLVYAVLG). Residues 114 to 117 (SSRD) lie on the Cytoplasmic side of the membrane. The helical transmembrane segment at 118–138 (LAVGPVSIASLILGSMLRQQV) threads the bilayer. Residues 139–144 (SPVDDP) are Extracellular-facing. A helical transmembrane segment spans residues 145-165 (VLFLQLAFSSTFFAGLFQASL). Over 166-171 (GILRLG) the chain is Cytoplasmic. Residues 172–192 (FIIDFLSKATLIGFMGGAAII) form a helical membrane-spanning segment. At 193-223 (VSLQQLKGLLGITHFTKHMSVVPVLSSVFQH) the chain is on the extracellular side. The helical transmembrane segment at 224 to 244 (TNEWSWQTIVMGVCFLLFLLS) threads the bilayer. Residues 245 to 256 (TRHLSMKKPKLF) are Cytoplasmic-facing. The helical transmembrane segment at 257 to 277 (WVSAGAPLLSVIVSTLLVFVF) threads the bilayer. Residues 278–309 (RAERHGISVIGKLPEGLNPPSWNMLQFHGSHL) lie on the Extracellular side of the membrane. A helical membrane pass occupies residues 310–330 (ALVAKTGLVTGIVSLTEGIAV). Residues 331 to 347 (GRTFAALKNYHVDGNKE) lie on the Cytoplasmic side of the membrane. Residues 348–368 (MIAIGLMNVVGSATSCYVTTG) form a helical membrane-spanning segment. Residues 369–384 (AFSRSAVNNNAGAKTA) are Extracellular-facing. A helical membrane pass occupies residues 385-405 (VSNIVMSVTVMVTLLFLMPLF). The Cytoplasmic segment spans residues 406 to 410 (EYTPN). A helical membrane pass occupies residues 411–431 (VVLGAIIVTAVIGLIDLPAAC). The Extracellular segment spans residues 432-441 (HIWKIDKFDF). A helical membrane pass occupies residues 442–462 (LVMLCAFFGVIFLSVQNGLAI). Over 463–631 (AVGLSLFKIL…SLKGPSLSNV (169 aa)) the chain is Cytoplasmic. The region spanning 497-621 (HYKEAQRIPG…LTVAEAVASL (125 aa)) is the STAS domain.

It belongs to the SLC26A/SulP transporter (TC 2.A.53) family. In terms of tissue distribution, expressed only in leaves.

The protein localises to the membrane. Its function is as follows. H(+)/sulfate cotransporter that may play a role in the regulation of sulfate assimilation. This Arabidopsis thaliana (Mouse-ear cress) protein is Probable sulfate transporter 3.3 (SULTR3;3).